The sequence spans 320 residues: Acyl-coenzyme A thioesterase 8 (320 aa).

Active-site charge relay system residues include D233, S255, and Q305. The Microbody targeting signal motif lies at 318 to 320 (SKL).

The protein belongs to the C/M/P thioester hydrolase family. Homodimer.

Its subcellular location is the peroxisome matrix. The catalysed reaction is choloyl-CoA + H2O = cholate + CoA + H(+). The enzyme catalyses chenodeoxycholoyl-CoA + H2O = chenodeoxycholate + CoA + H(+). It catalyses the reaction acetyl-CoA + H2O = acetate + CoA + H(+). It carries out the reaction butanoyl-CoA + H2O = butanoate + CoA + H(+). The catalysed reaction is hexanoyl-CoA + H2O = hexanoate + CoA + H(+). The enzyme catalyses octanoyl-CoA + H2O = octanoate + CoA + H(+). It catalyses the reaction decanoyl-CoA + H2O = decanoate + CoA + H(+). It carries out the reaction dodecanoyl-CoA + H2O = dodecanoate + CoA + H(+). The catalysed reaction is tetradecanoyl-CoA + H2O = tetradecanoate + CoA + H(+). The enzyme catalyses 4,8-dimethylnonanoyl-CoA + H2O = 4,8-dimethylnonanoate + CoA + H(+). It catalyses the reaction 2,6-dimethylheptanoyl-CoA + H2O = 2,6-dimethylheptanoate + CoA + H(+). It carries out the reaction malonyl-CoA + H2O = malonate + CoA + H(+). The catalysed reaction is acetoacetyl-CoA + H2O = acetoacetate + CoA + H(+). The enzyme catalyses propanoyl-CoA + H2O = propanoate + CoA + H(+). It catalyses the reaction succinyl-CoA + H2O = succinate + CoA + H(+). It carries out the reaction glutaryl-CoA + H2O = glutarate + CoA + H(+). The catalysed reaction is hexanedioyl-CoA + H2O = hexanedioate + CoA + H(+). The enzyme catalyses octanedioyl-CoA + H2O = octanedioate + CoA + H(+). It catalyses the reaction decanedioyl-CoA + H2O = decanedioate + CoA + H(+). It carries out the reaction dodecanedioyl-CoA + H2O = dodecanedioate + CoA + H(+). The catalysed reaction is (9Z)-tetradecenoyl-CoA + H2O = (9Z)-tetradecenoate + CoA + H(+). The enzyme catalyses hexadecanoyl-CoA + H2O = hexadecanoate + CoA + H(+). It catalyses the reaction (9Z)-hexadecenoyl-CoA + H2O = (9Z)-hexadecenoate + CoA + H(+). It carries out the reaction octadecanoyl-CoA + H2O = octadecanoate + CoA + H(+). The catalysed reaction is (9Z)-octadecenoyl-CoA + H2O = (9Z)-octadecenoate + CoA + H(+). The enzyme catalyses (9Z,12Z)-octadecadienoyl-CoA + H2O = (9Z,12Z)-octadecadienoate + CoA + H(+). It catalyses the reaction eicosanoyl-CoA + H2O = eicosanoate + CoA + H(+). It carries out the reaction (5Z,8Z,11Z,14Z)-eicosatetraenoyl-CoA + H2O = (5Z,8Z,11Z,14Z)-eicosatetraenoate + CoA + H(+). The catalysed reaction is (3S)-3-hydroxy-3-methylglutaryl-CoA + H2O = 3-hydroxy-3-methylglutarate + CoA + H(+). The enzyme catalyses 3alpha,7alpha,12alpha-trihydroxy-5beta-cholestan-26-oyl-CoA + H2O = 3alpha,7alpha,12alpha-trihydroxy-5beta-cholestan-26-oate + CoA + H(+). It catalyses the reaction 2-methyloctadecanoyl-CoA + H2O = 2-methyloctadecanoate + CoA + H(+). It carries out the reaction prostaglandin F2alpha-CoA + H2O = prostaglandin F2alpha + CoA + H(+). With respect to regulation, inhibited by CoASH (IC(50)=10-15 uM). Also inhibited by cysteine-reactive agents. In terms of biological role, catalyzes the hydrolysis of acyl-CoAs into free fatty acids and coenzyme A (CoASH), regulating their respective intracellular levels. Displays no strong substrate specificity with respect to the carboxylic acid moiety of Acyl-CoAs. Hydrolyzes medium length (C2 to C20) straight-chain, saturated and unsaturated acyl-CoAS but is inactive towards substrates with longer aliphatic chains. Moreover, it catalyzes the hydrolysis of CoA esters of bile acids, such as choloyl-CoA and chenodeoxycholoyl-CoA and competes with bile acid CoA:amino acid N-acyltransferase (BAAT). Is also able to hydrolyze CoA esters of dicarboxylic acids. It is involved in the metabolic regulation of peroxisome proliferation. In Rattus norvegicus (Rat), this protein is Acyl-coenzyme A thioesterase 8 (Acot8).